The sequence spans 312 residues: Serine/threonine-protein phosphatase PP1 isozyme 5 (312 aa).

At A2 the chain carries N-acetylalanine. Mn(2+) contacts are provided by D70, H72, D98, and N130. Residue H131 is the Proton donor of the active site. Positions 179 and 254 each coordinate Mn(2+).

Belongs to the PPP phosphatase family. PP-1 subfamily. Mn(2+) serves as cofactor.

It localises to the nucleus. The protein resides in the cytoplasm. It catalyses the reaction O-phospho-L-seryl-[protein] + H2O = L-seryl-[protein] + phosphate. It carries out the reaction O-phospho-L-threonyl-[protein] + H2O = L-threonyl-[protein] + phosphate. With respect to regulation, phosphatase activity is strongly reduced by the protein phosphatase inhibitor 2 (I-2). Its function is as follows. Serine/threonine-protein phosphatase that possesses phosphatase activity toward para-nitrophenyl phosphate (pNPP) in vitro. This is Serine/threonine-protein phosphatase PP1 isozyme 5 from Arabidopsis thaliana (Mouse-ear cress).